The chain runs to 98 residues: NADH-ubiquinone oxidoreductase chain 4L (98 aa).

2 helical membrane-spanning segments follow: residues 29–49 (SLLCLEGMMLSMFILSTLLIL) and 61–81 (ILLLVFAACEAAIGLALLVTV).

Belongs to the complex I subunit 4L family. Core subunit of respiratory chain NADH dehydrogenase (Complex I) which is composed of 45 different subunits.

Its subcellular location is the mitochondrion inner membrane. The catalysed reaction is a ubiquinone + NADH + 5 H(+)(in) = a ubiquinol + NAD(+) + 4 H(+)(out). Its function is as follows. Core subunit of the mitochondrial membrane respiratory chain NADH dehydrogenase (Complex I) which catalyzes electron transfer from NADH through the respiratory chain, using ubiquinone as an electron acceptor. Part of the enzyme membrane arm which is embedded in the lipid bilayer and involved in proton translocation. The protein is NADH-ubiquinone oxidoreductase chain 4L (MT-ND4L) of Cheirogaleus medius (Fat-tailed dwarf lemur).